We begin with the raw amino-acid sequence, 654 residues long: Heat shock 70 kDa protein 2 (654 aa).

A compositionally biased stretch (gly residues) spans 612–646; that stretch reads AGGEGGAPGAGFPGAGGPGGFPGAGAGGAHSGGDD. Residues 612–654 are disordered; the sequence is AGGEGGAPGAGFPGAGGPGGFPGAGAGGAHSGGDDGPTVEEVD.

This sequence belongs to the heat shock protein 70 family.

The polypeptide is Heat shock 70 kDa protein 2 (HSP70-2) (Paracoccidioides lutzii (strain ATCC MYA-826 / Pb01) (Paracoccidioides brasiliensis)).